A 524-amino-acid chain; its full sequence is Phenylalanine--tRNA ligase alpha subunit (524 aa).

Positions 362, 441, and 467 each coordinate L-phenylalanine.

It belongs to the class-II aminoacyl-tRNA synthetase family. Phe-tRNA synthetase alpha subunit type 2 subfamily. Tetramer of two alpha and two beta subunits. The cofactor is Mg(2+).

The protein localises to the cytoplasm. The enzyme catalyses tRNA(Phe) + L-phenylalanine + ATP = L-phenylalanyl-tRNA(Phe) + AMP + diphosphate + H(+). The chain is Phenylalanine--tRNA ligase alpha subunit from Methanopyrus kandleri (strain AV19 / DSM 6324 / JCM 9639 / NBRC 100938).